Consider the following 158-residue polypeptide: Curculin-2 (158 aa).

The first 22 residues, 1 to 22 (MAAKFLLTILVTFAAVASLGMA), serve as a signal peptide directing secretion. One can recognise a Bulb-type lectin domain in the interval 23–131 (DSVLLSGQTL…VLWPLGLNGC (109 aa)). A disulfide bond links Cys-51 and Cys-74. An N-linked (GlcNAc...) asparagine glycan is attached at Asn-103. A propeptide spanning residues 136–158 (GEITVAKDSTEPQHEDIKMVINN) is cleaved from the precursor.

As to quaternary structure, heterodimer with curculin-1; Disulfide-linked.

Taste-modifying protein; sweet-tasting. After curculin, water elicits a sweet taste, and sour substances induce a stronger sense of sweetness. This is Curculin-2 from Molineria latifolia (Lumbah).